Here is a 187-residue protein sequence, read N- to C-terminus: Peptidyl-tRNA hydrolase (187 aa).

Tyrosine 14 contributes to the tRNA binding site. The active-site Proton acceptor is histidine 19. 2 residues coordinate tRNA: tyrosine 64 and asparagine 66.

It belongs to the PTH family. Monomer.

It localises to the cytoplasm. It catalyses the reaction an N-acyl-L-alpha-aminoacyl-tRNA + H2O = an N-acyl-L-amino acid + a tRNA + H(+). In terms of biological role, hydrolyzes ribosome-free peptidyl-tRNAs (with 1 or more amino acids incorporated), which drop off the ribosome during protein synthesis, or as a result of ribosome stalling. Catalyzes the release of premature peptidyl moieties from peptidyl-tRNA molecules trapped in stalled 50S ribosomal subunits, and thus maintains levels of free tRNAs and 50S ribosomes. The chain is Peptidyl-tRNA hydrolase from Carboxydothermus hydrogenoformans (strain ATCC BAA-161 / DSM 6008 / Z-2901).